Consider the following 28-residue polypeptide: 14-3-3-like protein 4 (28 aa).

This sequence belongs to the 14-3-3 family.

The polypeptide is 14-3-3-like protein 4 (Pseudotsuga menziesii (Douglas-fir)).